The primary structure comprises 101 residues: Ubiquitin-related modifier 1 (101 aa).

At Gly-101 the chain carries 1-thioglycine. Residue Gly-101 forms a Glycyl lysine isopeptide (Gly-Lys) (interchain with K-? in acceptor proteins) linkage.

Belongs to the URM1 family. In terms of processing, C-terminal thiocarboxylation occurs in 2 steps, it is first acyl-adenylated (-COAMP) via the hesA/moeB/thiF part of UBA4, then thiocarboxylated (-COSH) via the rhodanese domain of UBA4.

The protein resides in the cytoplasm. It functions in the pathway tRNA modification; 5-methoxycarbonylmethyl-2-thiouridine-tRNA biosynthesis. In terms of biological role, acts as a sulfur carrier required for 2-thiolation of mcm(5)S(2)U at tRNA wobble positions of cytosolic tRNA(Lys), tRNA(Glu) and tRNA(Gln). Serves as sulfur donor in tRNA 2-thiolation reaction by being thiocarboxylated (-COSH) at its C-terminus by the MOCS3 homolog UBA4. The sulfur is then transferred to tRNA to form 2-thiolation of mcm(5)S(2)U. Prior mcm(5) tRNA modification by the elongator complex is required for 2-thiolation. Also acts as a ubiquitin-like protein (UBL) that is covalently conjugated via an isopeptide bond to lysine residues of target proteins such as AHP1. The thiocarboxylated form serves as substrate for conjugation and oxidative stress specifically induces the formation of UBL-protein conjugates. The protein is Ubiquitin-related modifier 1 of Debaryomyces hansenii (strain ATCC 36239 / CBS 767 / BCRC 21394 / JCM 1990 / NBRC 0083 / IGC 2968) (Yeast).